The following is a 674-amino-acid chain: Dymeclin (674 aa).

Residue Gly2 is the site of N-myristoyl glycine attachment.

Belongs to the dymeclin family. Interacts with GOLM1 and PPIB. In terms of processing, myristoylated in vitro; myristoylation is not essential for protein targeting to Golgi compartment.

The protein localises to the cytoplasm. It localises to the golgi apparatus. It is found in the membrane. Its function is as follows. Necessary for correct organization of Golgi apparatus. Involved in bone development. The protein is Dymeclin (Dym) of Rattus norvegicus (Rat).